The sequence spans 203 residues: MSSEAPEPDAPASTDDERVSAQLFGEWEIGEIEYDDPSTRRYITVTPIAHTMGRHSEKQFKKSEISIVERLINRLMQTDENTGKKQQATKIVREAFDIVAERTDENPVQVLVTAVENAGPREETVRLKYGGISVPKAVDVAPQRRVDLALKFIAEGTYNDSFKTTTPVEEALAHQLIGAANYDLQAYPVSQKEEQERVAAAAR.

Residues 1–21 (MSSEAPEPDAPASTDDERVSA) form a disordered region.

It belongs to the universal ribosomal protein uS7 family. As to quaternary structure, part of the 30S ribosomal subunit.

One of the primary rRNA binding proteins, it binds directly to 16S rRNA where it nucleates assembly of the head domain of the 30S subunit. Is located at the subunit interface close to the decoding center. The polypeptide is Small ribosomal subunit protein uS7 (Natronomonas pharaonis (strain ATCC 35678 / DSM 2160 / CIP 103997 / JCM 8858 / NBRC 14720 / NCIMB 2260 / Gabara) (Halobacterium pharaonis)).